Here is a 457-residue protein sequence, read N- to C-terminus: uncharacterized protein (457 aa).

12 consecutive transmembrane segments (helical) span residues 18–38 (VMTVAGATVGFGATWRFPYLV), 44–64 (GAYVLLFCIAMIVIGIPMILV), 101–121 (MGLLGAFGIMAYYMVLGGWVI), 158–178 (IIFYTLLFVIVNYIILAKGII), 188–208 (LMPLLFIFLIGMVIRNVTLPG), 228–248 (LFIFVLGQVFFALSLGFGVLI), 273–293 (IIAVLAGFMIFPSLFTFGIEP), 294–314 (NAGPTLVFQSLPIVFSHLWAG), 316–336 (FFAIIFFGLLLIAALTTSITI), 355–375 (AIVLTLSGIFLLGNIPAILGD), 396–416 (SGNILFMLTALGCAIFVGFVL), and 433–453 (IKIWFNYVKFVVPLIILVIFI).

It belongs to the sodium:neurotransmitter symporter (SNF) (TC 2.A.22) family.

It is found in the cell membrane. Functionally, putative sodium-dependent transporter. This is an uncharacterized protein from Haemophilus influenzae (strain ATCC 51907 / DSM 11121 / KW20 / Rd).